The following is a 527-amino-acid chain: Glucose-6-phosphate isomerase (527 aa).

The active-site Proton donor is the Glu-323. Active-site residues include His-352 and Lys-454.

Belongs to the GPI family.

The protein resides in the cytoplasm. It carries out the reaction alpha-D-glucose 6-phosphate = beta-D-fructose 6-phosphate. The protein operates within carbohydrate biosynthesis; gluconeogenesis. It functions in the pathway carbohydrate degradation; glycolysis; D-glyceraldehyde 3-phosphate and glycerone phosphate from D-glucose: step 2/4. Catalyzes the reversible isomerization of glucose-6-phosphate to fructose-6-phosphate. This Prochlorococcus marinus (strain MIT 9301) protein is Glucose-6-phosphate isomerase.